A 286-amino-acid chain; its full sequence is 4-diphosphocytidyl-2-C-methyl-D-erythritol kinase (286 aa).

Residue lysine 13 is part of the active site. 99-109 (PMGGGLGGGSS) is a binding site for ATP. Aspartate 141 is an active-site residue.

The protein belongs to the GHMP kinase family. IspE subfamily.

The catalysed reaction is 4-CDP-2-C-methyl-D-erythritol + ATP = 4-CDP-2-C-methyl-D-erythritol 2-phosphate + ADP + H(+). Its pathway is isoprenoid biosynthesis; isopentenyl diphosphate biosynthesis via DXP pathway; isopentenyl diphosphate from 1-deoxy-D-xylulose 5-phosphate: step 3/6. In terms of biological role, catalyzes the phosphorylation of the position 2 hydroxy group of 4-diphosphocytidyl-2C-methyl-D-erythritol. This Herminiimonas arsenicoxydans protein is 4-diphosphocytidyl-2-C-methyl-D-erythritol kinase.